The following is a 255-amino-acid chain: Acetylglutamate kinase (255 aa).

Residues 40-41 (GG), R62, and N153 each bind substrate.

The protein belongs to the acetylglutamate kinase family. ArgB subfamily.

Its subcellular location is the cytoplasm. It catalyses the reaction N-acetyl-L-glutamate + ATP = N-acetyl-L-glutamyl 5-phosphate + ADP. The protein operates within amino-acid biosynthesis; L-arginine biosynthesis; N(2)-acetyl-L-ornithine from L-glutamate: step 2/4. Functionally, catalyzes the ATP-dependent phosphorylation of N-acetyl-L-glutamate. This chain is Acetylglutamate kinase, found in Bacillus thuringiensis subsp. konkukian (strain 97-27).